A 294-amino-acid chain; its full sequence is Cytidine deaminase (294 aa).

2 CMP/dCMP-type deaminase domains span residues 48–168 and 186–294; these read DDDA…FGPR and LKGD…VTLA. 89 to 91 lines the substrate pocket; the sequence is NME. His102 is a binding site for Zn(2+). Catalysis depends on Glu104, which acts as the Proton donor. Positions 129 and 132 each coordinate Zn(2+).

This sequence belongs to the cytidine and deoxycytidylate deaminase family. In terms of assembly, homodimer. It depends on Zn(2+) as a cofactor.

It carries out the reaction cytidine + H2O + H(+) = uridine + NH4(+). It catalyses the reaction 2'-deoxycytidine + H2O + H(+) = 2'-deoxyuridine + NH4(+). In terms of biological role, this enzyme scavenges exogenous and endogenous cytidine and 2'-deoxycytidine for UMP synthesis. This is Cytidine deaminase from Cronobacter sakazakii (strain ATCC BAA-894) (Enterobacter sakazakii).